The following is a 125-amino-acid chain: Phosphoribosyl-AMP cyclohydrolase (125 aa).

Asp-74 contacts Mg(2+). Cys-75 lines the Zn(2+) pocket. Mg(2+) contacts are provided by Asp-76 and Asp-78. Cys-92 and Cys-99 together coordinate Zn(2+).

This sequence belongs to the PRA-CH family. Homodimer. It depends on Mg(2+) as a cofactor. Zn(2+) is required as a cofactor.

It localises to the cytoplasm. It catalyses the reaction 1-(5-phospho-beta-D-ribosyl)-5'-AMP + H2O = 1-(5-phospho-beta-D-ribosyl)-5-[(5-phospho-beta-D-ribosylamino)methylideneamino]imidazole-4-carboxamide. It participates in amino-acid biosynthesis; L-histidine biosynthesis; L-histidine from 5-phospho-alpha-D-ribose 1-diphosphate: step 3/9. Its function is as follows. Catalyzes the hydrolysis of the adenine ring of phosphoribosyl-AMP. The sequence is that of Phosphoribosyl-AMP cyclohydrolase from Geobacter sp. (strain M21).